The chain runs to 529 residues: MGPSCPVFLSFTKLSLWWLLLTPAGGEEAKRPPPRAPGDPLSSPSPTALPQGGSHTETEDRLFKHLFRGYNRWARPVPNTSDVVIVRFGLSIAQLIDVDEKNQMMTTNVWLKQEWSDYKLRWNPTDFGNITSLRVPSEMIWIPDIVLYNNADGEFAVTHMTKAHLFSTGTVHWVPPAIYKSSCSIDVTFFPFDQQNCKMKFGSWTYDKAKIDLEQMEQTVDLKDYWESGEWAIVNATGTYNSKKYDCCAEIYPDVTYAFVIRRLPLFYTINLIIPCLLISCLTVLVFYLPSDCGEKITLCISVLLSLTVFLLLITEIIPSTSLVIPLIGEYLLFTMIFVTLSIVITVFVLNVHHRSPSTHTMPHWVRGALLGCVPRWLLMNRPPPPVELCHPLRLKLSPSYHWLESNVDAEEREVVVEEEDRWACAGHVAPSVGTLCSHGHLHSGASGPKAEALLQEGELLLSPHMQKALEGVHYIADHLRSEDADSSVKEDWKYVAMVIDRIFLWLFIIVCFLGTIGLFLPPFLAGMI.

Residues 1 to 26 (MGPSCPVFLSFTKLSLWWLLLTPAGG) form the signal peptide. Residues 27 to 56 (EEAKRPPPRAPGDPLSSPSPTALPQGGSHT) form a disordered region. The Extracellular portion of the chain corresponds to 27–264 (EEAKRPPPRA…VTYAFVIRRL (238 aa)). Residues N79 and N129 are each glycosylated (N-linked (GlcNAc...) asparagine). A disulfide bridge links C183 with C197. N-linked (GlcNAc...) asparagine glycosylation occurs at N235. C247 and C248 are joined by a disulfide. Helical transmembrane passes span 265 to 289 (PLFYTINLIIPCLLISCLTVLVFYL), 297 to 315 (ITLCISVLLSLTVFLLLIT), and 331 to 352 (YLLFTMIFVTLSIVITVFVLNV). Residues 353–502 (HHRSPSTHTM…WKYVAMVIDR (150 aa)) are Cytoplasmic-facing. The chain crosses the membrane as a helical span at residues 503 to 521 (IFLWLFIIVCFLGTIGLFL).

It belongs to the ligand-gated ion channel (TC 1.A.9) family. Acetylcholine receptor (TC 1.A.9.1) subfamily. Alpha-2/CHRNA2 sub-subfamily. As to quaternary structure, neuronal AChR is composed of two different types of subunits: alpha and non-alpha (beta). CHRNA2/alpha-2 subunit can be combined to CHRNB2/beta-2 or CHRNB4/beta-4 to give rise to functional receptors. Both CHRNA2:CHRNB2 and CHRNA2:CHRNB4 nAChR complexes are heteropentamers with two subtypes: LS (low agonist sensitivity) with a (CHRNA2)3:(CHRNB2/4)2 and HS (high agonist sensitivity) with a (CHRNA2)2:(CHRNB2/4)3 stoichiometries; the subtypes differ in their subunit binding interfaces which are involved in ligand binding.

It localises to the synaptic cell membrane. The protein localises to the cell membrane. The catalysed reaction is Ca(2+)(in) = Ca(2+)(out). The enzyme catalyses K(+)(in) = K(+)(out). It catalyses the reaction Na(+)(in) = Na(+)(out). Its function is as follows. Component of neuronal acetylcholine receptors (nAChRs) that function as pentameric, ligand-gated cation channels with high calcium permeability among other activities. nAChRs are excitatory neurotrasnmitter receptors formed by a collection of nAChR subunits known to mediate synaptic transmission in the nervous system and the neuromuscular junction. Each nAchR subunit confers differential attributes to channel properties, including activation, deactivation and desensitization kinetics, pH sensitivity, cation permeability, and binding to allosteric modulators. CHRNA2 forms heteropentameric neuronal acetylcholine receptors with CHRNB2 and CHRNB4 and plays a role in nicotine dependence. This Homo sapiens (Human) protein is Neuronal acetylcholine receptor subunit alpha-2.